A 121-amino-acid polypeptide reads, in one-letter code: Large ribosomal subunit protein bL12 (121 aa).

The protein belongs to the bacterial ribosomal protein bL12 family. In terms of assembly, homodimer. Part of the ribosomal stalk of the 50S ribosomal subunit. Forms a multimeric L10(L12)X complex, where L10 forms an elongated spine to which 2 to 4 L12 dimers bind in a sequential fashion. Binds GTP-bound translation factors.

In terms of biological role, forms part of the ribosomal stalk which helps the ribosome interact with GTP-bound translation factors. Is thus essential for accurate translation. This is Large ribosomal subunit protein bL12 from Shigella sonnei (strain Ss046).